A 318-amino-acid chain; its full sequence is Protein-L-histidine N-pros-methyltransferase (318 aa).

A signal peptide spans M1 to A18. N35 carries an N-linked (GlcNAc...) asparagine glycan. 3 residues coordinate S-adenosyl-L-homocysteine: E174, N210, and Y295.

It belongs to the METTL9 family.

Its subcellular location is the endoplasmic reticulum. It localises to the mitochondrion. The enzyme catalyses L-histidyl-[protein] + S-adenosyl-L-methionine = N(pros)-methyl-L-histidyl-[protein] + S-adenosyl-L-homocysteine + H(+). Protein-histidine N-methyltransferase that specifically catalyzes 1-methylhistidine (pros-methylhistidine) methylation of target proteins. Specifically methylates the second His of proteins with a His-x-His (HxH) motif (where 'x' is preferably a small amino acid), while exploiting the first one as a recognition signature. Catalyzes methylation of target proteins such as S100A9, NDUFB3, SLC39A5, SLC39A7, ARMC6 and DNAJB12; 1-methylhistidine modification may affect the binding of zinc and other metals to its target proteins. Constitutes the main methyltransferase for the 1-methylhistidine modification in cell. This Bos taurus (Bovine) protein is Protein-L-histidine N-pros-methyltransferase.